The primary structure comprises 605 residues: Aspartate--tRNA(Asp/Asn) ligase (605 aa).

An L-aspartate-binding site is contributed by Glu183. The segment at 207–210 (QLFK) is aspartate. Arg229 is an L-aspartate binding site. ATP-binding positions include 229–231 (RDE) and Gln238. His457 serves as a coordination point for L-aspartate. Glu497 is an ATP binding site. Arg504 is a binding site for L-aspartate. Residue 549-552 (GLDR) coordinates ATP.

This sequence belongs to the class-II aminoacyl-tRNA synthetase family. Type 1 subfamily. In terms of assembly, homodimer.

It is found in the cytoplasm. It carries out the reaction tRNA(Asx) + L-aspartate + ATP = L-aspartyl-tRNA(Asx) + AMP + diphosphate. In terms of biological role, aspartyl-tRNA synthetase with relaxed tRNA specificity since it is able to aspartylate not only its cognate tRNA(Asp) but also tRNA(Asn). Reaction proceeds in two steps: L-aspartate is first activated by ATP to form Asp-AMP and then transferred to the acceptor end of tRNA(Asp/Asn). The protein is Aspartate--tRNA(Asp/Asn) ligase of Persephonella marina (strain DSM 14350 / EX-H1).